The primary structure comprises 444 residues: Phosphoglucosamine mutase (444 aa).

Catalysis depends on Ser102, which acts as the Phosphoserine intermediate. Residues Ser102, Asp239, Asp241, and Asp243 each contribute to the Mg(2+) site. Ser102 carries the post-translational modification Phosphoserine.

This sequence belongs to the phosphohexose mutase family. The cofactor is Mg(2+). Activated by phosphorylation.

It catalyses the reaction alpha-D-glucosamine 1-phosphate = D-glucosamine 6-phosphate. In terms of biological role, catalyzes the conversion of glucosamine-6-phosphate to glucosamine-1-phosphate. In Mycolicibacterium paratuberculosis (strain ATCC BAA-968 / K-10) (Mycobacterium paratuberculosis), this protein is Phosphoglucosamine mutase.